We begin with the raw amino-acid sequence, 119 residues long: Large ribosomal subunit protein bL20 (119 aa).

This sequence belongs to the bacterial ribosomal protein bL20 family.

In terms of biological role, binds directly to 23S ribosomal RNA and is necessary for the in vitro assembly process of the 50S ribosomal subunit. It is not involved in the protein synthesizing functions of that subunit. In Azorhizobium caulinodans (strain ATCC 43989 / DSM 5975 / JCM 20966 / LMG 6465 / NBRC 14845 / NCIMB 13405 / ORS 571), this protein is Large ribosomal subunit protein bL20.